Reading from the N-terminus, the 353-residue chain is Guanine nucleotide-binding protein subunit beta-5 (353 aa).

7 WD repeats span residues 61-100 (GHGN…KEHA), 103-142 (MPCT…NENM), 151-192 (MHTN…QSFH), 194-236 (HGAD…QAFE), 237-276 (THES…EVAI), 278-320 (SKES…RVSI), and 323-352 (GHEN…LRVW).

The protein belongs to the WD repeat G protein beta family. Component of a complex composed of RGS9 (isoform RGS9-1), GNB5 and RGS9BP; within this complex, the presence of GNB5 stabilizes both itself and RGS9 and increases RGS9 GTPase-activating protein (GAP) activity. Interacts with RGS7, forming the RGS7-GNB5 complex; within this complex, the presence of GNB5 increases RGS7 GTPase-activating protein (GAP) activity. Interacts with GPR158; promotes the GTPase activator activity of the RGS7-GNB5 complex in absence of glycine, in contrast GTPase activator activity of the RGS7-GNB5 complex is inhibited in presence of glycine. Interacts with RGS6. As to expression, detected in brain.

The protein localises to the membrane. Functionally, enhances GTPase-activating protein (GAP) activity of regulator of G protein signaling (RGS) proteins, such as RGS7 and RGS9, hence involved in the termination of the signaling initiated by the G protein coupled receptors (GPCRs) by accelerating the GTP hydrolysis on the G-alpha subunits, thereby promoting their inactivation. Increases RGS7 GTPase-activating protein (GAP) activity, thereby regulating mood and cognition. Increases RGS9 GTPase-activating protein (GAP) activity, hence contributes to the deactivation of G protein signaling initiated by D(2) dopamine receptors. May play an important role in neuronal signaling, including in the parasympathetic, but not sympathetic, control of heart rate. This Rattus norvegicus (Rat) protein is Guanine nucleotide-binding protein subunit beta-5 (Gnb5).